The sequence spans 725 residues: Putative oligopeptide transporter YGL114W (725 aa).

A run of 9 helical transmembrane segments spans residues 28-48 (ATIA…QFGL), 134-154 (FREL…FAVP), 254-274 (IIIL…SYFV), 353-373 (WILW…FIVV), 449-469 (ISGC…LFGI), 472-492 (IPLY…ILGI), 564-584 (FCAQ…MYLC), 644-664 (YGYG…GIFN), and 697-717 (IVFS…NMLF).

The protein belongs to the oligopeptide OPT transporter family.

The protein localises to the membrane. This chain is Putative oligopeptide transporter YGL114W, found in Saccharomyces cerevisiae (strain ATCC 204508 / S288c) (Baker's yeast).